The chain runs to 165 residues: Phosphopantetheine adenylyltransferase (165 aa).

Thr9 lines the substrate pocket. Residues 9 to 10 and His17 each bind ATP; that span reads TF. Residues Lys41, Leu73, and Arg87 each coordinate substrate. ATP is bound by residues 88–90, Glu98, and 123–129; these read GLR and YQFISGT.

It belongs to the bacterial CoaD family. As to quaternary structure, homohexamer. Mg(2+) is required as a cofactor.

It localises to the cytoplasm. The enzyme catalyses (R)-4'-phosphopantetheine + ATP + H(+) = 3'-dephospho-CoA + diphosphate. Its pathway is cofactor biosynthesis; coenzyme A biosynthesis; CoA from (R)-pantothenate: step 4/5. Its function is as follows. Reversibly transfers an adenylyl group from ATP to 4'-phosphopantetheine, yielding dephospho-CoA (dPCoA) and pyrophosphate. The chain is Phosphopantetheine adenylyltransferase from Burkholderia vietnamiensis (strain G4 / LMG 22486) (Burkholderia cepacia (strain R1808)).